We begin with the raw amino-acid sequence, 382 residues long: Polyadenylate-binding protein 5 (382 aa).

RRM domains are found at residues 18–96 (AALY…WSQP), 106–182 (GNIF…RFKF), 199–276 (TNVF…RAQK), and 302–378 (VPIY…LGQA).

The protein resides in the cytoplasm. Its function is as follows. Binds the poly(A) tail of mRNA. May be involved in cytoplasmic regulatory processes of mRNA metabolism. Can probably bind to cytoplasmic RNA sequences other than poly(A) in vivo. This is Polyadenylate-binding protein 5 (PABPC5) from Macaca mulatta (Rhesus macaque).